The chain runs to 958 residues: Glycine dehydrogenase (decarboxylating) 2 (958 aa).

At lysine 707 the chain carries N6-(pyridoxal phosphate)lysine.

The protein belongs to the GcvP family. The glycine cleavage system is composed of four proteins: P, T, L and H. Pyridoxal 5'-phosphate is required as a cofactor.

It carries out the reaction N(6)-[(R)-lipoyl]-L-lysyl-[glycine-cleavage complex H protein] + glycine + H(+) = N(6)-[(R)-S(8)-aminomethyldihydrolipoyl]-L-lysyl-[glycine-cleavage complex H protein] + CO2. Functionally, the glycine cleavage system catalyzes the degradation of glycine. The P protein binds the alpha-amino group of glycine through its pyridoxal phosphate cofactor; CO(2) is released and the remaining methylamine moiety is then transferred to the lipoamide cofactor of the H protein. This Pseudomonas aeruginosa (strain ATCC 15692 / DSM 22644 / CIP 104116 / JCM 14847 / LMG 12228 / 1C / PRS 101 / PAO1) protein is Glycine dehydrogenase (decarboxylating) 2 (gcvP2).